The following is a 210-amino-acid chain: DNA replication complex GINS protein PSF3 (210 aa).

Belongs to the GINS3/PSF3 family. Component of the GINS complex which is a heterotetramer of gins1/psf1, gins2/psf2, gins3/psf3 and gins4/sld5. Component of the CMG helicase complex, composed of the mcm2-7 complex, the GINS complex and cdc45.

It localises to the nucleus. It is found in the chromosome. Functionally, required for correct functioning of the GINS complex, a complex that plays an essential role in the initiation of DNA replication, and progression of DNA replication forks. GINS complex is a core component of CDC45-MCM-GINS (CMG) helicase, the molecular machine that unwinds template DNA during replication, and around which the replisome is built. This is DNA replication complex GINS protein PSF3 from Xenopus laevis (African clawed frog).